The chain runs to 47 residues: Protein PsbN (47 aa).

The helical transmembrane segment at 7 to 29 (VAISISCLLISFTGYALYTAFGN) threads the bilayer.

The protein belongs to the PsbN family.

Its subcellular location is the plastid membrane. Functionally, may play a role in photosystem I and II biogenesis. The polypeptide is Protein PsbN (Aneura mirabilis (Parasitic liverwort)).